We begin with the raw amino-acid sequence, 647 residues long: 2',3'-cyclic-nucleotide 2'-phosphodiesterase/3'-nucleotidase (647 aa).

Residues 1-19 (MIKFSATLLATLIAASVNA) form the signal peptide. Positions 31, 33, 76, 116, 225, 257, and 259 each coordinate a divalent metal cation. Residues Tyr-440 and 544–550 (YRAYGGK) each bind substrate.

It belongs to the 5'-nucleotidase family. Requires a divalent metal cation as cofactor.

Its subcellular location is the periplasm. The catalysed reaction is a nucleoside 2',3'-cyclic phosphate + H2O = a nucleoside 3'-phosphate + H(+). It carries out the reaction a ribonucleoside 3'-phosphate + H2O = a ribonucleoside + phosphate. This bifunctional enzyme catalyzes two consecutive reactions during ribonucleic acid degradation. Converts a 2',3'-cyclic nucleotide to a 3'-nucleotide and then the 3'-nucleotide to the corresponding nucleoside and phosphate. In Salmonella typhimurium (strain LT2 / SGSC1412 / ATCC 700720), this protein is 2',3'-cyclic-nucleotide 2'-phosphodiesterase/3'-nucleotidase (cpdB).